A 546-amino-acid polypeptide reads, in one-letter code: 6'''-hydroxyparomomycin C oxidase (546 aa).

A disordered region spans residues 1–30 (MERLRGPSPLENTTARHPAPLGPAHRDGLE). His-475 functions as the Proton acceptor in the catalytic mechanism.

Belongs to the GMC oxidoreductase family. Requires FAD as cofactor.

The protein operates within antibiotic biosynthesis; lividomycin biosynthesis. Its function is as follows. Glucosaminyl-6'-oxidase involved in the biosynthetic pathway of lividomycin by mediating FAD-dependent dehydrogenation of 6'''-hydroxyparomomycin to paromomycin. The chain is 6'''-hydroxyparomomycin C oxidase (livQ) from Streptomyces lividus.